The primary structure comprises 444 residues: Glutamate dehydrogenase (444 aa).

Residue lysine 124 is part of the active site.

This sequence belongs to the Glu/Leu/Phe/Val dehydrogenases family. Homohexamer.

It carries out the reaction L-glutamate + NAD(+) + H2O = 2-oxoglutarate + NH4(+) + NADH + H(+). The catalysed reaction is L-glutamate + NADP(+) + H2O = 2-oxoglutarate + NH4(+) + NADPH + H(+). This chain is Glutamate dehydrogenase (gdhA), found in Bacteroides thetaiotaomicron (strain ATCC 29148 / DSM 2079 / JCM 5827 / CCUG 10774 / NCTC 10582 / VPI-5482 / E50).